Here is a 382-residue protein sequence, read N- to C-terminus: 2-heptyl-3-hydroxy-4(1H)-quinolone synthase (382 aa).

The protein belongs to the 3-hydroxybenzoate 6-hydroxylase family.

It catalyses the reaction 2-heptyl-4(1H)-quinolone + NADH + O2 + H(+) = 2-heptyl-3-hydroxy-4(1H)-quinolone + NAD(+) + H2O. In terms of biological role, involved in the terminal step of the biosynthesis of quinolone which in addition to serve as a potent signal for quorum sensing, chelates iron and promotes the formation of membrane vesicles (MVs). Catalyzes the hydroxylation of 2-heptyl-4-quinolone (C7-HHQ) to yield 2-heptyl-3-hydroxy-4-quinolone (PQS). PqsH is also able to hydroxylate HHQ analogs having alkyl side-chain lengths of 3 (C3-HHQ), 5 (C5-HHQ) and 9 (C9-HHQ) carbons, however catalytic efficiencies are significantly reduced for substrates with alkyl side-chain lengths below 7 carbons. This is 2-heptyl-3-hydroxy-4(1H)-quinolone synthase (pqsH) from Pseudomonas aeruginosa (strain UCBPP-PA14).